Here is a 2192-residue protein sequence, read N- to C-terminus: BEACH domain-containing protein lvsE (2192 aa).

Disordered stretches follow at residues 948–969 (STSL…TSTG), 996–1065 (TTTT…DEPE), 1160–1303 (NESQ…NNLS), and 1343–1363 (DENG…SSSN). A compositionally biased stretch (low complexity) spans 996–1049 (TTTTTTTTTTTTTTSTTSNTGNDSPLSIESPISSPVLIENTTNTTNTTTTNTTN). Residues 1171–1187 (NIDNLNPNTGLPYNKST) are compositionally biased toward polar residues. A compositionally biased stretch (low complexity) spans 1188 to 1231 (NNLSNVNNVNNNNNNNSNNINVSGNNTIGPSSSKSPLRNSRSMS). Positions 1232-1243 (IGSSATKSPSRQ) are enriched in polar residues. 2 stretches are compositionally biased toward low complexity: residues 1253–1303 (NNNS…NNLS) and 1350–1363 (SSPN…SSSN). In terms of domain architecture, BEACH-type PH spans 1366–1491 (IEEEKFIGSW…ESIQIFNKIV (126 aa)). Positions 1504-1795 (DHPSKIIKKS…QLFSKPHPIR (292 aa)) constitute a BEACH domain. Over residues 1823–1849 (GTINSSFSSTSTSTSTSSPPPSTLNSP) the composition is skewed to low complexity. The tract at residues 1823–1851 (GTINSSFSSTSTSTSTSSPPPSTLNSPQG) is disordered. 3 WD repeats span residues 1973 to 2012 (FHHD…IKDS), 2022 to 2061 (SHDE…YQRS), and 2156 to 2192 (DSPA…VKDL).

In Dictyostelium discoideum (Social amoeba), this protein is BEACH domain-containing protein lvsE (lvsE).